A 303-amino-acid polypeptide reads, in one-letter code: Movement protein (303 aa).

This sequence belongs to the tobamovirus movement protein family.

Its subcellular location is the host cytoplasm. The protein resides in the host cytoskeleton. The protein localises to the host cell junction. It is found in the host plasmodesma. Transports viral genome to neighboring plant cells directly through plasmosdesmata, without any budding. The movement protein allows efficient cell to cell propagation, by bypassing the host cell wall barrier. Forms a ribonucleoprotein complex with viral RNA. Binds microtubules and modulates microtubule stability. Can bind double-stranded DNA. This is Movement protein (MP) from Odontoglossum ringspot virus (isolate Korean Cy) (ORSV-Cy).